The chain runs to 951 residues: Protein translocase subunit SecA 1 (951 aa).

ATP is bound by residues Q87, 105-109 (GEGKT), and D525. The disordered stretch occupies residues 911-942 (PVVSADRSSRDPGNPASWGKVGRNEDCPCGSG). Zn(2+)-binding residues include C937, C939, C948, and H949.

Belongs to the SecA family. As to quaternary structure, monomer and homodimer. Part of the essential Sec protein translocation apparatus which comprises SecA, SecYEG and auxiliary proteins SecDF-YajC and YidC. It depends on Zn(2+) as a cofactor.

It localises to the cell inner membrane. The protein localises to the cytoplasm. It carries out the reaction ATP + H2O + cellular proteinSide 1 = ADP + phosphate + cellular proteinSide 2.. Part of the Sec protein translocase complex. Interacts with the SecYEG preprotein conducting channel. Has a central role in coupling the hydrolysis of ATP to the transfer of proteins into and across the cell membrane, serving both as a receptor for the preprotein-SecB complex and as an ATP-driven molecular motor driving the stepwise translocation of polypeptide chains across the membrane. The sequence is that of Protein translocase subunit SecA 1 from Nitrobacter hamburgensis (strain DSM 10229 / NCIMB 13809 / X14).